Consider the following 400-residue polypeptide: Probable peptidoglycan glycosyltransferase FtsW (400 aa).

At 1 to 29 (MVIERIKHLASPLQDWVFTPSPKVMFDRQ) the chain is on the cytoplasmic side. A helical membrane pass occupies residues 30-50 (LIWIALGLMLTGLVMVASASF). The Periplasmic segment spans residues 51–60 (PISTRLTGQP). A helical membrane pass occupies residues 61–81 (FHFMMRHMLFVFLALSISSIV). Residues 82-95 (LRIELNKWLKYSSH) are Cytoplasmic-facing. Residues 96 to 116 (LLLISLLLLAAVLVVGKSVNG) form a helical membrane-spanning segment. The Periplasmic portion of the chain corresponds to 117–122 (AARWLP). Residues 123–143 (LGIFNLQPAEVAKLSLFVFIA) traverse the membrane as a helical segment. Residues 144–155 (GYLVRRHGEVRD) lie on the Cytoplasmic side of the membrane. A helical membrane pass occupies residues 156–176 (SFRGFVKPLLVLITLAFFLLM). Over 177–178 (QP) the chain is Periplasmic. The helical transmembrane segment at 179–199 (DLGTTVVMFVTTIAMLFIAGA) threads the bilayer. Lys200 is a topological domain (cytoplasmic). A helical transmembrane segment spans residues 201-221 (LWQFIALVMGGISLVIVLILA). Topologically, residues 222-290 (EPYRMRRVTS…VFAVIAEELG (69 aa)) are periplasmic. Residues 291–311 (FVGVCLVLCLIFALVFKALLI) traverse the membrane as a helical segment. Residues 312–321 (GRKCLAHDQR) lie on the Cytoplasmic side of the membrane. A helical transmembrane segment spans residues 322-342 (FGGFLAFGIGIWFAFQTLVNV). Over 343 to 356 (GAAAGIVPTKGLTL) the chain is Periplasmic. A helical transmembrane segment spans residues 357–377 (PLISYGGSSLIIMSVAVSLLI). At 378–400 (RIDHECRVYLANEPPRSENEEQK) the chain is on the cytoplasmic side.

Belongs to the SEDS family. FtsW subfamily.

The protein resides in the cell inner membrane. The catalysed reaction is [GlcNAc-(1-&gt;4)-Mur2Ac(oyl-L-Ala-gamma-D-Glu-L-Lys-D-Ala-D-Ala)](n)-di-trans,octa-cis-undecaprenyl diphosphate + beta-D-GlcNAc-(1-&gt;4)-Mur2Ac(oyl-L-Ala-gamma-D-Glu-L-Lys-D-Ala-D-Ala)-di-trans,octa-cis-undecaprenyl diphosphate = [GlcNAc-(1-&gt;4)-Mur2Ac(oyl-L-Ala-gamma-D-Glu-L-Lys-D-Ala-D-Ala)](n+1)-di-trans,octa-cis-undecaprenyl diphosphate + di-trans,octa-cis-undecaprenyl diphosphate + H(+). Its pathway is cell wall biogenesis; peptidoglycan biosynthesis. In terms of biological role, peptidoglycan polymerase that is essential for cell division. The chain is Probable peptidoglycan glycosyltransferase FtsW from Aliivibrio salmonicida (strain LFI1238) (Vibrio salmonicida (strain LFI1238)).